The chain runs to 615 residues: Afadin- and alpha-actinin-binding protein (615 aa).

2 coiled-coil regions span residues 126-227 (KLGS…IAMD) and 266-293 (RQKQ…SLLS). Ser-290, Ser-293, Ser-313, and Ser-319 each carry phosphoserine. Residues 293–316 (SPQKKKPRERAEDGTGTVAISDIE) form a disordered region. Positions 375 to 461 (ISRQDHEQET…RSFTEAAIRL (87 aa)) form a coiled coil. A phosphoserine mark is found at Ser-537, Ser-541, and Ser-543. The tract at residues 567 to 615 (PEESKPSEVARESTDQKWSVQSRPSSREGCYSGCSSAFRSAHGDRDDLP) is disordered. A compositionally biased stretch (basic and acidic residues) spans 568–581 (EESKPSEVARESTD).

Belongs to the ADIP family. Interacts with SSX2 and SSX3. Does not interact with SSX1 and SSX4. Interacts with afadin and alpha-actinin. Interacts with VAV2. Interacts with PCM1. Interacts with WRAP73. Widely expressed.

It localises to the cell junction. The protein resides in the adherens junction. Its subcellular location is the nucleus. It is found in the cytoplasm. The protein localises to the cytoskeleton. It localises to the microtubule organizing center. The protein resides in the centrosome. Its subcellular location is the centriolar satellite. It is found in the cilium basal body. Its function is as follows. Belongs to an adhesion system, which plays a role in the organization of homotypic, interneuronal and heterotypic cell-cell adherens junctions (AJs). May connect the nectin-afadin and E-cadherin-catenin system through alpha-actinin and may be involved in organization of the actin cytoskeleton at AJs through afadin and alpha-actinin. Acts as a centrosome maturation factor, probably by maintaining the integrity of the pericentriolar material and proper microtubule nucleation at mitotic spindle poles. The function seems to implicate at least in part WRAP73; the SSX2IP:WRAP73 complex is proposed to act as regulator of spindle anchoring at the mitotic centrosome. Involved in cell movement: localizes at the leading edge of moving cells in response to PDGF and is required for the formation of the leading edge and the promotion of cell movement, possibly via activation of Rac signaling. Involved in ciliogenesis. It is required for targeted recruitment of the BBSome, CEP290, RAB8, and SSTR3 to the cilia. The chain is Afadin- and alpha-actinin-binding protein (Ssx2ip) from Mus musculus (Mouse).